A 561-amino-acid polypeptide reads, in one-letter code: Arginine--tRNA ligase (561 aa).

The short motif at 135–145 (ANPTGLLHMGN) is the 'HIGH' region element.

It belongs to the class-I aminoacyl-tRNA synthetase family. In terms of assembly, monomer.

The protein resides in the cytoplasm. It carries out the reaction tRNA(Arg) + L-arginine + ATP = L-arginyl-tRNA(Arg) + AMP + diphosphate. The protein is Arginine--tRNA ligase of Desulfitobacterium hafniense (strain DSM 10664 / DCB-2).